The sequence spans 494 residues: MKKEQVEKRTYLAVDIGASSGRIMKSQRLANGQITIEEIHRFKNGFHQKDGYQRWDMASLVHELLLGLQKVKQLGIKECFIGIDTWGVDYCLLDQSGQLLDEPIAYRDGRTEAAVTNFSKGYSLEKLYQQTGIQVQPFNTIFQLFVEEKERLAAASQLLLIPDYLGYVFTGKAVIEATNASTTQLLNAGTKQWESELLDFLGIDETLFPTLVEPGTILGDLQTAAFPDYDLPNATLITIASHDTASAILGTPGIGDDWAYISSGTWSLLGIETTVTTISAEAFQENYTNEWGAQNTIRFLKNIMGMWLIQEVARHQNYQYSYAELAALAEKEPAFQQFIDVNDPRFLNPGNMITELQAYCRETQQTVPESPGELARCIYDNLALCYSVELEKLAQLTGIERKITTLHVVGGGSNNRLLNQLTADVANVTVNAGPGEAIALGNLLMQMIATGELKDIPAARTCIQTSFPTEIYQANPIDSTIKNRYQAFMKRSSL.

18–22 provides a ligand contact to ATP; that stretch reads ASSGR. Residues G87 and 242–244 contribute to the substrate site; that span reads HDT. The active-site Proton acceptor is the D243. Position 265 (T265) interacts with ATP. N302 serves as a coordination point for substrate. Residue Q310 participates in ATP binding. An intrachain disulfide couples C360 to C377. G411 contributes to the ATP binding site.

It belongs to the rhamnulokinase family. It depends on Mg(2+) as a cofactor.

The catalysed reaction is L-rhamnulose + ATP = L-rhamnulose 1-phosphate + ADP + H(+). It participates in carbohydrate degradation; L-rhamnose degradation; glycerone phosphate from L-rhamnose: step 2/3. In terms of biological role, involved in the catabolism of L-rhamnose (6-deoxy-L-mannose). Catalyzes the transfer of the gamma-phosphate group from ATP to the 1-hydroxyl group of L-rhamnulose to yield L-rhamnulose 1-phosphate. This chain is Rhamnulokinase, found in Enterococcus faecalis (strain ATCC 700802 / V583).